Reading from the N-terminus, the 476-residue chain is Chromosomal replication initiator protein DnaA (476 aa).

The domain I, interacts with DnaA modulators stretch occupies residues 1–87 (MSESSHVGLW…LMYNVLVDKS (87 aa)). The segment at 87–130 (SSGATVNQESTTRSTAIPQSGLPRVDERKAPGLLRAPAVQDLDP) is domain II. Residues 131–348 (HLNPNYNFET…GIVISIMAHS (218 aa)) form a domain III, AAA+ region region. Residues Gly176, Gly178, Lys179, and Thr180 each contribute to the ATP site. The interval 349-476 (TIYNKEIDLD…KKRNVSNGER (128 aa)) is domain IV, binds dsDNA.

It belongs to the DnaA family. As to quaternary structure, oligomerizes as a right-handed, spiral filament on DNA at oriC.

The protein resides in the cytoplasm. In terms of biological role, plays an essential role in the initiation and regulation of chromosomal replication. ATP-DnaA binds to the origin of replication (oriC) to initiate formation of the DNA replication initiation complex once per cell cycle. Binds the DnaA box (a 9 base pair repeat at the origin) and separates the double-stranded (ds)DNA. Forms a right-handed helical filament on oriC DNA; dsDNA binds to the exterior of the filament while single-stranded (ss)DNA is stabiized in the filament's interior. The ATP-DnaA-oriC complex binds and stabilizes one strand of the AT-rich DNA unwinding element (DUE), permitting loading of DNA polymerase. After initiation quickly degrades to an ADP-DnaA complex that is not apt for DNA replication. Binds acidic phospholipids. This is Chromosomal replication initiator protein DnaA from Bacteroides fragilis (strain YCH46).